A 373-amino-acid polypeptide reads, in one-letter code: MASENNGSRSDSESITAPKADSTVVEPRKIALITGITGQDGSYLTEFLLGKGYEVHGLIRRSSNFNTQRINHIYIDPHNVNKALMKLHYADLTDASSLRRWIDVIKPDEVYNLAAQSHVAVSFEIPDYTADVVATGALRLLEAVRSHTIDSGRTVKYYQAGSSEMFGSTPPPQSETTPFHPRSPYAASKCAAHWYTVNYREAYGLFACNGILFNHESPRRGENFVTRKITRALGRIKVGLQTKLFLGNLQASRDWGFAGDYVEAMWLMLQQEKPDDYVVATEEGHTVEEFLDVSFGYLGLNWKDYVEIDQRYFRPAEVDNLQGDASKAKEVLGWKPQVGFEKLVKMMVDEDLELAKREKVLVDAGYMDAKQQP.

Polar residues predominate over residues 1–15 (MASENNGSRSDSESI). Residues 1–21 (MASENNGSRSDSESITAPKAD) are disordered. NADP(+) contacts are provided by residues 35–40 (GITGQD), R60, 91–92 (DL), 113–117 (LAAQS), and Y128. S117 is a binding site for substrate. Residue S162 participates in substrate binding. S162 is a catalytic residue. Catalysis depends on nucleophile residues E164 and Y185. Y185 is a binding site for substrate. Position 189 (K189) interacts with NADP(+). N214 is a substrate binding site. NADP(+)-binding residues include H215 and R220. Substrate-binding positions include 220–228 (RGENFVTRK), G247, R253, and 314–317 (RPAE).

Belongs to the NAD(P)-dependent epimerase/dehydratase family. GDP-mannose 4,6-dehydratase subfamily. As to quaternary structure, homotetramer. Binds to GER1. The cofactor is NADP(+). In terms of tissue distribution, expressed in roots, flowers, siliques, leaves and stems. Not expressed in the root meristem and the proximal part of the elongation zone, or in emerging lateral roots. Expressed in trichomes and guard cells, and in pollen just before anthesis.

The catalysed reaction is GDP-alpha-D-mannose = GDP-4-dehydro-alpha-D-rhamnose + H2O. The protein operates within nucleotide-sugar biosynthesis; GDP-L-fucose biosynthesis via de novo pathway; GDP-L-fucose from GDP-alpha-D-mannose: step 1/2. Functionally, catalyzes the conversion of GDP-D-mannose to GDP-4-dehydro-6-deoxy-D-mannose. The chain is GDP-mannose 4,6 dehydratase 2 (MUR1) from Arabidopsis thaliana (Mouse-ear cress).